The sequence spans 276 residues: S-adenosylmethionine decarboxylase proenzyme (276 aa).

Catalysis depends on S124, which acts as the Schiff-base intermediate with substrate; via pyruvic acid. S124 carries the pyruvic acid (Ser); by autocatalysis modification. Residue H129 is the Proton acceptor; for processing activity of the active site. C152 (proton donor; for catalytic activity) is an active-site residue.

The protein belongs to the prokaryotic AdoMetDC family. Type 2 subfamily. As to quaternary structure, heterooctamer of four alpha and four beta chains arranged as a tetramer of alpha/beta heterodimers. Pyruvate is required as a cofactor. Post-translationally, is synthesized initially as an inactive proenzyme. Formation of the active enzyme involves a self-maturation process in which the active site pyruvoyl group is generated from an internal serine residue via an autocatalytic post-translational modification. Two non-identical subunits are generated from the proenzyme in this reaction, and the pyruvate is formed at the N-terminus of the alpha chain, which is derived from the carboxyl end of the proenzyme. The post-translation cleavage follows an unusual pathway, termed non-hydrolytic serinolysis, in which the side chain hydroxyl group of the serine supplies its oxygen atom to form the C-terminus of the beta chain, while the remainder of the serine residue undergoes an oxidative deamination to produce ammonia and the pyruvoyl group blocking the N-terminus of the alpha chain.

It carries out the reaction S-adenosyl-L-methionine + H(+) = S-adenosyl 3-(methylsulfanyl)propylamine + CO2. It functions in the pathway amine and polyamine biosynthesis; S-adenosylmethioninamine biosynthesis; S-adenosylmethioninamine from S-adenosyl-L-methionine: step 1/1. Catalyzes the decarboxylation of S-adenosylmethionine to S-adenosylmethioninamine (dcAdoMet), the propylamine donor required for the synthesis of the polyamines spermine and spermidine from the diamine putrescine. The chain is S-adenosylmethionine decarboxylase proenzyme from Desulfitobacterium hafniense (strain Y51).